Consider the following 253-residue polypeptide: Core protein VP8 (253 aa).

A propeptide spanning residues 1-31 (MNDLLLENLFGEKALCAQVTRDQLLEIIAAG) is cleaved from the precursor.

This sequence belongs to the chordopoxvirinae VP8 family. In terms of processing, undergoes morphogenesis-associated proteolysis which cleaves the 28 kDa to a 25-kDa product. Proteolytic cleavage of major core proteins P4a (A10L), P4b (A3L), and VP8 (L4R), which occurs at a late stage of core formation, is required for production of infectious mature virions (MV).

Its subcellular location is the virion. Major core structural protein. The sequence is that of Core protein VP8 from Vertebrata (FPV).